We begin with the raw amino-acid sequence, 196 residues long: Pyridoxine/pyridoxamine 5'-phosphate oxidase (196 aa).

FMN contacts are provided by residues 44 to 49 (RTVLLK), 59 to 60 (YT), arginine 65, lysine 66, and glutamine 88. Lysine 49 lines the substrate pocket. Substrate contacts are provided by tyrosine 106, arginine 110, and serine 114. FMN is bound by residues 123 to 124 (QS) and tryptophan 169. Position 175-177 (175-177 (RLH)) interacts with substrate. Arginine 179 provides a ligand contact to FMN.

The protein belongs to the pyridoxamine 5'-phosphate oxidase family. As to quaternary structure, homodimer. FMN serves as cofactor.

It catalyses the reaction pyridoxamine 5'-phosphate + O2 + H2O = pyridoxal 5'-phosphate + H2O2 + NH4(+). It carries out the reaction pyridoxine 5'-phosphate + O2 = pyridoxal 5'-phosphate + H2O2. It participates in cofactor metabolism; pyridoxal 5'-phosphate salvage; pyridoxal 5'-phosphate from pyridoxamine 5'-phosphate: step 1/1. The protein operates within cofactor metabolism; pyridoxal 5'-phosphate salvage; pyridoxal 5'-phosphate from pyridoxine 5'-phosphate: step 1/1. Catalyzes the oxidation of either pyridoxine 5'-phosphate (PNP) or pyridoxamine 5'-phosphate (PMP) into pyridoxal 5'-phosphate (PLP). The chain is Pyridoxine/pyridoxamine 5'-phosphate oxidase from Alkalilimnicola ehrlichii (strain ATCC BAA-1101 / DSM 17681 / MLHE-1).